A 482-amino-acid chain; its full sequence is NADH-quinone oxidoreductase subunit D (482 aa).

Over residues 1 to 16 the composition is skewed to low complexity; it reads MTTNTSTSSTTDDLTT. A disordered region spans residues 1–48; it reads MTTNTSTSSTTDDLTTGAPNGTGAPDGANGVGGPTGTVGGPGEHPAYE. The segment covering 29–42 has biased composition (gly residues); the sequence is NGVGGPTGTVGGPG.

Belongs to the complex I 49 kDa subunit family. NDH-1 is composed of 14 different subunits. Subunits NuoB, C, D, E, F, and G constitute the peripheral sector of the complex.

Its subcellular location is the cell membrane. It catalyses the reaction a quinone + NADH + 5 H(+)(in) = a quinol + NAD(+) + 4 H(+)(out). Its function is as follows. NDH-1 shuttles electrons from NADH, via FMN and iron-sulfur (Fe-S) centers, to quinones in the respiratory chain. The immediate electron acceptor for the enzyme in this species is believed to be a menaquinone. Couples the redox reaction to proton translocation (for every two electrons transferred, four hydrogen ions are translocated across the cytoplasmic membrane), and thus conserves the redox energy in a proton gradient. The sequence is that of NADH-quinone oxidoreductase subunit D from Frankia casuarinae (strain DSM 45818 / CECT 9043 / HFP020203 / CcI3).